A 663-amino-acid polypeptide reads, in one-letter code: UvrABC system protein B (663 aa).

Over residues 1 to 10 (MIDKRDDKPF) the composition is skewed to basic and acidic residues. Residues 1–23 (MIDKRDDKPFKLKSKYKPSGDQP) form a disordered region. Residues 31-418 (DNIEGGEKAQ…TNTIIEQIIR (388 aa)) form the Helicase ATP-binding domain. 44–51 (GATGTGKT) contacts ATP. The Beta-hairpin motif lies at 97-120 (YYDYYQPEAYVPSSDTYIEKDSSV). A Helicase C-terminal domain is found at 435-601 (QMDDLLGEIN…TIKKDIRGLI (167 aa)). The UVR domain maps to 627–662 (KEAINALQKQMQEAAELLDFELAAQMRDLILELKLM).

It belongs to the UvrB family. Forms a heterotetramer with UvrA during the search for lesions. Interacts with UvrC in an incision complex.

Its subcellular location is the cytoplasm. In terms of biological role, the UvrABC repair system catalyzes the recognition and processing of DNA lesions. A damage recognition complex composed of 2 UvrA and 2 UvrB subunits scans DNA for abnormalities. Upon binding of the UvrA(2)B(2) complex to a putative damaged site, the DNA wraps around one UvrB monomer. DNA wrap is dependent on ATP binding by UvrB and probably causes local melting of the DNA helix, facilitating insertion of UvrB beta-hairpin between the DNA strands. Then UvrB probes one DNA strand for the presence of a lesion. If a lesion is found the UvrA subunits dissociate and the UvrB-DNA preincision complex is formed. This complex is subsequently bound by UvrC and the second UvrB is released. If no lesion is found, the DNA wraps around the other UvrB subunit that will check the other stand for damage. This is UvrABC system protein B from Streptococcus pyogenes serotype M28 (strain MGAS6180).